The chain runs to 332 residues: Holliday junction branch migration complex subunit RuvB (332 aa).

The large ATPase domain (RuvB-L) stretch occupies residues 1–181 (MARILDNDVM…FGITGHMEYY (181 aa)). ATP is bound by residues Leu-20, Arg-21, Gly-62, Lys-65, Thr-66, Thr-67, 128–130 (EDF), Arg-171, Tyr-181, and Arg-218. Thr-66 is a Mg(2+) binding site. The segment at 182-252 (QEKDLTEIVE…ITDRALTMLD (71 aa)) is small ATPAse domain (RuvB-S). The segment at 255-332 (REGLDYIDQK…RHLGYPYQNT (78 aa)) is head domain (RuvB-H). 4 residues coordinate DNA: Arg-291, Arg-310, Arg-312, and Arg-315.

It belongs to the RuvB family. Homohexamer. Forms an RuvA(8)-RuvB(12)-Holliday junction (HJ) complex. HJ DNA is sandwiched between 2 RuvA tetramers; dsDNA enters through RuvA and exits via RuvB. An RuvB hexamer assembles on each DNA strand where it exits the tetramer. Each RuvB hexamer is contacted by two RuvA subunits (via domain III) on 2 adjacent RuvB subunits; this complex drives branch migration. In the full resolvosome a probable DNA-RuvA(4)-RuvB(12)-RuvC(2) complex forms which resolves the HJ.

It localises to the cytoplasm. It carries out the reaction ATP + H2O = ADP + phosphate + H(+). The RuvA-RuvB-RuvC complex processes Holliday junction (HJ) DNA during genetic recombination and DNA repair, while the RuvA-RuvB complex plays an important role in the rescue of blocked DNA replication forks via replication fork reversal (RFR). RuvA specifically binds to HJ cruciform DNA, conferring on it an open structure. The RuvB hexamer acts as an ATP-dependent pump, pulling dsDNA into and through the RuvAB complex. RuvB forms 2 homohexamers on either side of HJ DNA bound by 1 or 2 RuvA tetramers; 4 subunits per hexamer contact DNA at a time. Coordinated motions by a converter formed by DNA-disengaged RuvB subunits stimulates ATP hydrolysis and nucleotide exchange. Immobilization of the converter enables RuvB to convert the ATP-contained energy into a lever motion, pulling 2 nucleotides of DNA out of the RuvA tetramer per ATP hydrolyzed, thus driving DNA branch migration. The RuvB motors rotate together with the DNA substrate, which together with the progressing nucleotide cycle form the mechanistic basis for DNA recombination by continuous HJ branch migration. Branch migration allows RuvC to scan DNA until it finds its consensus sequence, where it cleaves and resolves cruciform DNA. The chain is Holliday junction branch migration complex subunit RuvB from Streptococcus pyogenes serotype M3 (strain ATCC BAA-595 / MGAS315).